A 181-amino-acid polypeptide reads, in one-letter code: dCTP deaminase (181 aa).

DCTP-binding positions include 100 to 105 (RSTFAR) and D116. The active-site Proton donor/acceptor is E126. The dCTP site is built by Y158 and Q165. Residues 160 to 181 (GKYQGQRGVTPPKLDNSSSKNF) form a disordered region.

This sequence belongs to the dCTP deaminase family. Homotrimer.

It carries out the reaction dCTP + H2O + H(+) = dUTP + NH4(+). The protein operates within pyrimidine metabolism; dUMP biosynthesis; dUMP from dCTP (dUTP route): step 1/2. In terms of biological role, catalyzes the deamination of dCTP to dUTP. This chain is dCTP deaminase, found in Desulfurococcus amylolyticus (strain DSM 18924 / JCM 16383 / VKM B-2413 / 1221n) (Desulfurococcus kamchatkensis).